The primary structure comprises 280 residues: Probable endonuclease 4 (280 aa).

Zn(2+) is bound by residues His-69, His-109, Glu-145, Asp-179, His-182, His-216, Asp-229, His-231, and Glu-261.

The protein belongs to the AP endonuclease 2 family. The cofactor is Zn(2+).

It catalyses the reaction Endonucleolytic cleavage to 5'-phosphooligonucleotide end-products.. Its function is as follows. Endonuclease IV plays a role in DNA repair. It cleaves phosphodiester bonds at apurinic or apyrimidinic (AP) sites, generating a 3'-hydroxyl group and a 5'-terminal sugar phosphate. In Actinobacillus pleuropneumoniae serotype 7 (strain AP76), this protein is Probable endonuclease 4.